The following is a 446-amino-acid chain: Glucarate dehydratase (446 aa).

4 residues coordinate substrate: His-32, Thr-103, Tyr-150, and Lys-205. The active-site Proton acceptor is Lys-207. Residues Asp-235, Glu-266, and Asn-289 each contribute to the Mg(2+) site. Residue 235–237 (DPN) coordinates substrate. Residues Asn-289, 339-341 (HSN), His-368, and Arg-422 contribute to the substrate site. The active-site Proton acceptor is the His-339.

This sequence belongs to the mandelate racemase/muconate lactonizing enzyme family. GlucD subfamily. In terms of assembly, homodimer. The cofactor is Mg(2+).

The enzyme catalyses D-glucarate = 5-dehydro-4-deoxy-D-glucarate + H2O. It participates in carbohydrate acid metabolism; D-glucarate degradation; 2,5-dioxopentanoate from D-glucarate: step 1/2. Its function is as follows. Catalyzes the dehydration of glucarate to 5-keto-4-deoxy-D-glucarate (5-kdGluc). Also acts on L-idarate. This Escherichia coli O157:H7 protein is Glucarate dehydratase (gudD).